A 276-amino-acid chain; its full sequence is Putative pyridoxine kinase (276 aa).

An ATP-binding site is contributed by asparagine 139. Glutamate 142 serves as a coordination point for Mg(2+). ATP is bound by residues 176-180, aspartate 188, glycine 213, and lysine 238; that span reads KGGKA.

This sequence belongs to the ThiD family.

The enzyme catalyses pyridoxal + ATP = pyridoxal 5'-phosphate + ADP + H(+). Its function is as follows. Phosphorylates B6 vitamers; functions in a salvage pathway. Uses pyridoxal, pyridoxine, and pyridoxamine as substrates. The chain is Putative pyridoxine kinase (pdxK) from Staphylococcus epidermidis (strain ATCC 35984 / DSM 28319 / BCRC 17069 / CCUG 31568 / BM 3577 / RP62A).